A 245-amino-acid polypeptide reads, in one-letter code: 1-(5-phosphoribosyl)-5-[(5-phosphoribosylamino)methylideneamino] imidazole-4-carboxamide isomerase (245 aa).

Catalysis depends on Asp7, which acts as the Proton acceptor. Residue Asp129 is the Proton donor of the active site.

The protein belongs to the HisA/HisF family.

The protein resides in the cytoplasm. The enzyme catalyses 1-(5-phospho-beta-D-ribosyl)-5-[(5-phospho-beta-D-ribosylamino)methylideneamino]imidazole-4-carboxamide = 5-[(5-phospho-1-deoxy-D-ribulos-1-ylimino)methylamino]-1-(5-phospho-beta-D-ribosyl)imidazole-4-carboxamide. It functions in the pathway amino-acid biosynthesis; L-histidine biosynthesis; L-histidine from 5-phospho-alpha-D-ribose 1-diphosphate: step 4/9. In Escherichia coli (strain 55989 / EAEC), this protein is 1-(5-phosphoribosyl)-5-[(5-phosphoribosylamino)methylideneamino] imidazole-4-carboxamide isomerase.